Consider the following 432-residue polypeptide: MGSCSLQLPLINLADKTLEPGSSKWAEVRSDVRKALEDFGCFEASYDKVSLELQESIMKTMEELFALPVETKQRNVCPKPYVGYLNHNNLSESLGISNANILENVNEFTQQLWPDGDGNENISKTIQLFAEKLVEIDVMVRRMVMESFGIEKYIDDHLKSTEYRMRLMKYIAPPEGDANTTVDDYADLLAKLNIDGVEPNVGVKVNADISDDVNANPSVNAGVGANVNADTGVNDNLNVDAEANGDANIAVGGGVNANTDLGVGVNVNSNVAVNAKTGATSGDDVEANDDNEEKKLGLPCHTDKNLFTVLFQHEIEGLEVKTKDEKWIRVKPSPNTFIVIAGDSLCALMNGRIRAPYHRVRVTEKKRTRYTAAIFTCPKPDYVIEAPKELVDEKHPRLFRPFDYRDLFTFYHSEAGRKIQYTLQAYCAVSEA.

A Fe2OG dioxygenase domain is found at 281-378 (SGDDVEANDD…RYTAAIFTCP (98 aa)). Fe cation is bound by residues His301, Asp303, and His358. Arg369 contributes to the 2-oxoglutarate binding site.

This sequence belongs to the iron/ascorbate-dependent oxidoreductase family. Requires Fe(2+) as cofactor.

Its function is as follows. 2-oxoglutarate-dependent dioxygenase involved in glucosinolates biosynthesis. Catalyzes the conversion of methylsulfinylalkyl glucosinolates to alkenyl glucosinolates. The sequence is that of 2-oxoglutarate-dependent dioxygenase AOP2 (AOP2) from Arabidopsis thaliana (Mouse-ear cress).